Here is a 209-residue protein sequence, read N- to C-terminus: Kynurenine formamidase (209 aa).

Trp-19 is a binding site for substrate. Residues His-49, His-53, and Asp-55 each coordinate Zn(2+). The Proton donor/acceptor role is filled by His-59. Positions 160 and 172 each coordinate Zn(2+).

Belongs to the Cyclase 1 superfamily. KynB family. As to quaternary structure, homodimer. It depends on Zn(2+) as a cofactor.

The enzyme catalyses N-formyl-L-kynurenine + H2O = L-kynurenine + formate + H(+). It participates in amino-acid degradation; L-tryptophan degradation via kynurenine pathway; L-kynurenine from L-tryptophan: step 2/2. In terms of biological role, catalyzes the hydrolysis of N-formyl-L-kynurenine to L-kynurenine, the second step in the kynurenine pathway of tryptophan degradation. This chain is Kynurenine formamidase, found in Ralstonia pickettii (strain 12J).